Consider the following 970-residue polypeptide: Serine/threonine-protein kinase PLK4 (970 aa).

The 254-residue stretch at 12-265 (FKVGNLLGKG…LSSVLDHPFM (254 aa)) folds into the Protein kinase domain. Residues 18–26 (LGKGSFAGV) and Lys-41 each bind ATP. 2 positions are modified to N6-acetyllysine: Lys-45 and Lys-46. Asp-136 serves as the catalytic Proton acceptor. Disordered stretches follow at residues 323–458 (TVFP…NHLC) and 497–538 (SISP…HSVK). Polar residues predominate over residues 328–356 (NKSSTDFSSSGDGNSFYTQWGNQETSNSG). Basic and acidic residues predominate over residues 360–369 (VIQDAEERPH). Residues 379–393 (SDRSGTSNSQSQAKT) show a composition bias toward polar residues. Ser-401 bears the Phosphoserine mark. Residues 438 to 454 (SSSSGSFERPDNNQALS) show a composition bias toward polar residues. Residues 504–515 (FQGHPDLQKDTS) are compositionally biased toward basic and acidic residues. The region spanning 586–699 (TLRSITSPLV…SRFVQLVRSK (114 aa)) is the Cryptic POLO box 1 (CPB1) domain. The residue at position 665 (Ser-665) is a Phosphoserine. Residues 700-813 (SPKITYFTRY…GRKPGSTSSP (114 aa)) form the Cryptic POLO box 2 (CPB2) domain. A disordered region spans residues 808 to 828 (GSTSSPKALSPPPSVDSNYPT). Ser-817 carries the post-translational modification Phosphoserine. Residues 886–964 (QLLKSVFVKN…LSSILLMFSN (79 aa)) enclose the POLO box domain.

It belongs to the protein kinase superfamily. Ser/Thr protein kinase family. CDC5/Polo subfamily. In terms of assembly, homodimer. Interacts with CEP152 (via N-terminus). Interacts with CEP78; this interaction may be important for proper PLK4 localization to the centriole and PLK4-induced overduplication of centrioles. Interacts with CEP131. Interacts simultaneously with TENT5C and CEP192. Interacts with TENT5C; this interaction leads to the TENT5C recruitment in the centrosome. Interacts with CEP85; this interaction may be important in cell migration and centriole assembly. Post-translationally, acetylation by KAT2A and KAT2B impairs kinase activity by shifting the kinase to an inactive conformation. Ubiquitinated; leading to its degradation by the proteasome. Deubiquitinated by USP54; leading to PLK4 stabilization. In terms of processing, tyrosine-phosphorylated by TEC.

It localises to the cytoplasm. Its subcellular location is the cytoskeleton. It is found in the microtubule organizing center. The protein localises to the centrosome. The protein resides in the centriole. It localises to the nucleus. Its subcellular location is the nucleolus. It is found in the cleavage furrow. The catalysed reaction is L-seryl-[protein] + ATP = O-phospho-L-seryl-[protein] + ADP + H(+). It carries out the reaction L-threonyl-[protein] + ATP = O-phospho-L-threonyl-[protein] + ADP + H(+). Its function is as follows. Serine/threonine-protein kinase that plays a central role in centriole duplication. Able to trigger procentriole formation on the surface of the parental centriole cylinder, leading to the recruitment of centriole biogenesis proteins such as SASS6, CPAP, CCP110, CEP135 and gamma-tubulin. When overexpressed, it is able to induce centrosome amplification through the simultaneous generation of multiple procentrioles adjoining each parental centriole during S phase. Phosphorylates 'Ser-151' of FBXW5 during the G1/S transition, leading to inhibit FBXW5 ability to ubiquitinate SASS6. Its central role in centriole replication suggests a possible role in tumorigenesis, centrosome aberrations being frequently observed in tumors. Also involved in deuterosome-mediated centriole amplification in multiciliated that can generate more than 100 centrioles. Also involved in trophoblast differentiation by phosphorylating HAND1, leading to disrupt the interaction between HAND1 and MDFIC and activate HAND1. Phosphorylates CDC25C and CHEK2. Required for the recruitment of STIL to the centriole and for STIL-mediated centriole amplification. Phosphorylates CEP131 at 'Ser-78' and PCM1 at 'Ser-372' which is essential for proper organization and integrity of centriolar satellites. This chain is Serine/threonine-protein kinase PLK4, found in Homo sapiens (Human).